The primary structure comprises 235 residues: Phosphoribosylformylglycinamidine synthase subunit PurQ (235 aa).

The 231-residue stretch at 5–235 folds into the Glutamine amidotransferase type-1 domain; that stretch reads FGVVVFPGSN…LLNHVSIVAA (231 aa). Cys88 (nucleophile) is an active-site residue. Catalysis depends on residues His205 and Glu207.

In terms of assembly, part of the FGAM synthase complex composed of 1 PurL, 1 PurQ and 2 PurS subunits.

Its subcellular location is the cytoplasm. It catalyses the reaction N(2)-formyl-N(1)-(5-phospho-beta-D-ribosyl)glycinamide + L-glutamine + ATP + H2O = 2-formamido-N(1)-(5-O-phospho-beta-D-ribosyl)acetamidine + L-glutamate + ADP + phosphate + H(+). The catalysed reaction is L-glutamine + H2O = L-glutamate + NH4(+). It participates in purine metabolism; IMP biosynthesis via de novo pathway; 5-amino-1-(5-phospho-D-ribosyl)imidazole from N(2)-formyl-N(1)-(5-phospho-D-ribosyl)glycinamide: step 1/2. Part of the phosphoribosylformylglycinamidine synthase complex involved in the purines biosynthetic pathway. Catalyzes the ATP-dependent conversion of formylglycinamide ribonucleotide (FGAR) and glutamine to yield formylglycinamidine ribonucleotide (FGAM) and glutamate. The FGAM synthase complex is composed of three subunits. PurQ produces an ammonia molecule by converting glutamine to glutamate. PurL transfers the ammonia molecule to FGAR to form FGAM in an ATP-dependent manner. PurS interacts with PurQ and PurL and is thought to assist in the transfer of the ammonia molecule from PurQ to PurL. This Salinibacter ruber (strain DSM 13855 / M31) protein is Phosphoribosylformylglycinamidine synthase subunit PurQ.